A 399-amino-acid polypeptide reads, in one-letter code: MPVDDFSLSANSISGESTLVYQDVARQVQKTKGIRIINFGIGQPDLPTFARIREAAKKSLDEGFTGYTSAYGIDELRQKIAEHLSSKYESVRKEEVIVTPGAKTALYLAFLLYINPGDEVIIFDPSFYSYAEVVKMLGGVPVYVKMKFNESTGFSLNLSELESKINKKTKMIVLNNPHNPTGMVFDPIEIEKLMEITKEKKVLLLSDEIYDYFIYEGKMKSVLEDPDWRDYVIYVNGFSKTFSMTGWRLGYVVAKEKVIKKMAEIAANIYTCPTSFAQKGALAAFESFDEVKEMISLFKKRRDIMYEELKKIKGIQVHKSQGAFYMFPFIGEILKKANLSVKDFSLKLIEEKGVTTIPGEVFPLEVGKDFVRLSFAVKEDDIREGIKRMKEFIDMLMTP.

Residues glycine 42 and asparagine 179 each contribute to the L-aspartate site. Position 240 is an N6-(pyridoxal phosphate)lysine (lysine 240). Residue arginine 372 coordinates L-aspartate.

The protein belongs to the class-I pyridoxal-phosphate-dependent aminotransferase family. As to quaternary structure, homodimer. It depends on pyridoxal 5'-phosphate as a cofactor.

The protein localises to the cytoplasm. It catalyses the reaction L-aspartate + 2-oxoglutarate = oxaloacetate + L-glutamate. The polypeptide is Aspartate aminotransferase (aspC) (Sulfurisphaera tokodaii (strain DSM 16993 / JCM 10545 / NBRC 100140 / 7) (Sulfolobus tokodaii)).